Reading from the N-terminus, the 649-residue chain is Nitrosuccinic acid synthase npaA (649 aa).

It belongs to the nitrosuccinic acid synthase family. The cofactor is FAD.

The catalysed reaction is L-aspartate + 3 NADPH + 3 O2 + 2 H(+) = 2-nitrobutanedioate + 3 NADP(+) + 4 H2O. It functions in the pathway mycotoxin biosynthesis. Nitrosuccinic acid synthase; part of the gene cluster that mediates the biosynthesis of the deadly neurotoxic nitroalkane 3-nitropropanoic acid (3-NPA) that acts as an antimetabolite of succinate and irreversibly inhibits succinate dehydrogenase and disrupts mitochondrial oxidative phosphorylation. NpaA catalyzes the iterative oxidation of L-aspartic acid to nitrosuccinic acid (2-nitrobutanedioate). Alternative amino acid substrates such as L-glutamate and D-aspartate are not accepted by npaA as a substrate, showing the strict substrate specificity toward L-aspartate. The nitrosuccinic acid decarboxylase npaB then facilitates decarboxylation of Nitrosuccinic acid to produce 3-NPA. This Aspergillus oryzae (strain ATCC 42149 / RIB 40) (Yellow koji mold) protein is Nitrosuccinic acid synthase npaA.